Reading from the N-terminus, the 365-residue chain is tRNA 2-selenouridine synthase (365 aa).

Residues 15 to 138 (FVNDHPIMDA…MRQFLIETID (124 aa)) enclose the Rhodanese domain. C98 serves as the catalytic S-selanylcysteine intermediate.

It belongs to the SelU family. As to quaternary structure, monomer.

The enzyme catalyses 5-methylaminomethyl-2-thiouridine(34) in tRNA + selenophosphate + (2E)-geranyl diphosphate + H2O + H(+) = 5-methylaminomethyl-2-selenouridine(34) in tRNA + (2E)-thiogeraniol + phosphate + diphosphate. It carries out the reaction 5-methylaminomethyl-2-thiouridine(34) in tRNA + (2E)-geranyl diphosphate = 5-methylaminomethyl-S-(2E)-geranyl-thiouridine(34) in tRNA + diphosphate. It catalyses the reaction 5-methylaminomethyl-S-(2E)-geranyl-thiouridine(34) in tRNA + selenophosphate + H(+) = 5-methylaminomethyl-2-(Se-phospho)selenouridine(34) in tRNA + (2E)-thiogeraniol. The catalysed reaction is 5-methylaminomethyl-2-(Se-phospho)selenouridine(34) in tRNA + H2O = 5-methylaminomethyl-2-selenouridine(34) in tRNA + phosphate. In terms of biological role, involved in the post-transcriptional modification of the uridine at the wobble position (U34) of tRNA(Lys), tRNA(Glu) and tRNA(Gln). Catalyzes the conversion of 2-thiouridine (S2U-RNA) to 2-selenouridine (Se2U-RNA). Acts in a two-step process involving geranylation of 2-thiouridine (S2U) to S-geranyl-2-thiouridine (geS2U) and subsequent selenation of the latter derivative to 2-selenouridine (Se2U) in the tRNA chain. This Shewanella halifaxensis (strain HAW-EB4) protein is tRNA 2-selenouridine synthase.